We begin with the raw amino-acid sequence, 647 residues long: MINITFPDGAVREFESGVTTFEIAQSISNSLAKKALAGKFNGKLIDTTRAITEDGSIEIVTPDHEDALPILRHSAAHLFAQAARRLFPDIHLGVGPAIEDGFYYDTDNTAGQISNEDLPRIEEEMQKIVKENFPSIREEVTKDEAREIFKNDPYKLELIEEHSEDEGGLTIYRQGEYVDLCRGPHVPSTGRIQIFHLLHVAGAYWRGNSDNAMMQRIYGTAWFDKKDLKNYLQMREEAKERDHRKLGKELDLFMISQEVGQGLPFWLPNGATIRRELERYIVNKELVSGYQHVYTPPLASVELYKTSGHWDHYQEDMFPTMDMGDGEEFVLRPMNCPHHIQVFKHHVHSYRELPIRIAEIGMMHRYEKSGALTGLQRVREMSLNDGHLFVTPEQIQEEFQRALQLIIDVYEDFNLTDYRFRLSLRDPQDTHKYFDNDEMWENAQTMLRAALDEMGVDYFEAEGEAAFYGPKLDIQIKTALGKEETLSTIQLDFLLPERFDLKYIGADGEDHRPVMIHRGVISTMERFTAILIENYKGAFPTWLAPHQVTLIPVSNEKHVDYAWEVAKKLRDRGVRADVDERNEKMQFKIRASQTSKIPYQLIVGDKEMEDETVNVRRYGQKETQTVSVDNFVQAILADIANKSRVEK.

In terms of domain architecture, TGS spans 1–61 (MINITFPDGA…TEDGSIEIVT (61 aa)). The segment at 242–540 (DHRKLGKELD…LIENYKGAFP (299 aa)) is catalytic. Zn(2+)-binding residues include Cys-336, His-387, and His-517.

The protein belongs to the class-II aminoacyl-tRNA synthetase family. Homodimer. It depends on Zn(2+) as a cofactor.

The protein resides in the cytoplasm. It carries out the reaction tRNA(Thr) + L-threonine + ATP = L-threonyl-tRNA(Thr) + AMP + diphosphate + H(+). In terms of biological role, catalyzes the attachment of threonine to tRNA(Thr) in a two-step reaction: L-threonine is first activated by ATP to form Thr-AMP and then transferred to the acceptor end of tRNA(Thr). Also edits incorrectly charged L-seryl-tRNA(Thr). The chain is Threonine--tRNA ligase from Streptococcus pneumoniae serotype 4 (strain ATCC BAA-334 / TIGR4).